The chain runs to 97 residues: Citrate lyase acyl carrier protein (97 aa).

Residue Ser14 is modified to O-(phosphoribosyl dephospho-coenzyme A)serine.

It belongs to the CitD family. As to quaternary structure, oligomer with a subunit composition of (alpha,beta,gamma)6.

It is found in the cytoplasm. Functionally, covalent carrier of the coenzyme of citrate lyase. The polypeptide is Citrate lyase acyl carrier protein (Enterobacter sp. (strain 638)).